The chain runs to 340 residues: Ketol-acid reductoisomerase (NADP(+)) (340 aa).

The KARI N-terminal Rossmann domain maps to 2–182 (AELYYDNQAD…GCTRAGVLRT (181 aa)). Residues 25 to 28 (FGSQ), Ser51, Ser53, and 83 to 86 (DIGQ) contribute to the NADP(+) site. Residue His108 is part of the active site. Gly134 serves as a coordination point for NADP(+). A KARI C-terminal knotted domain is found at 183–328 (TFAEETETDL…RELRRMMPFV (146 aa)). Positions 191, 195, 227, and 231 each coordinate Mg(2+). Ser252 is a substrate binding site.

This sequence belongs to the ketol-acid reductoisomerase family. It depends on Mg(2+) as a cofactor.

The enzyme catalyses (2R)-2,3-dihydroxy-3-methylbutanoate + NADP(+) = (2S)-2-acetolactate + NADPH + H(+). It carries out the reaction (2R,3R)-2,3-dihydroxy-3-methylpentanoate + NADP(+) = (S)-2-ethyl-2-hydroxy-3-oxobutanoate + NADPH + H(+). The protein operates within amino-acid biosynthesis; L-isoleucine biosynthesis; L-isoleucine from 2-oxobutanoate: step 2/4. Its pathway is amino-acid biosynthesis; L-valine biosynthesis; L-valine from pyruvate: step 2/4. Involved in the biosynthesis of branched-chain amino acids (BCAA). Catalyzes an alkyl-migration followed by a ketol-acid reduction of (S)-2-acetolactate (S2AL) to yield (R)-2,3-dihydroxy-isovalerate. In the isomerase reaction, S2AL is rearranged via a Mg-dependent methyl migration to produce 3-hydroxy-3-methyl-2-ketobutyrate (HMKB). In the reductase reaction, this 2-ketoacid undergoes a metal-dependent reduction by NADPH to yield (R)-2,3-dihydroxy-isovalerate. This is Ketol-acid reductoisomerase (NADP(+)) from Chloroflexus aurantiacus (strain ATCC 29366 / DSM 635 / J-10-fl).